The sequence spans 1049 residues: MKDMDCIPGPKPLPVVGNLFDLDLDNALQSIIRMADEFGPLFQITINGQKQIFATSQALVDELCDETRFHKAVMGGVEKLRMLAQDGLFTAHHGERGWGIAHRILMPAFGPLRIRDMFEDMSDVAHQLCFKWARQGSSASINIAEDFTRLTLDTIALCTMSFRLNSYYNSETMHPFVQSMLYVLKEADLQATLPGVANCVRVKAQRRMSKHIQAMRNIAGDIIKGRRDKPEPVDDLLNTLLNGRDPVTGEGMSDELIISNIITFLVAGHETTSGLLSFTFYYLLQHPHVLEQARNEVDEVVGVGPITVQHLAKLPYIDAVMKESLRLMPTAPAFTVTPKKPEVVGGKWMVNTGQSVHVLLPVCLRDEAVFGPDAGEFRPTRMLEENFSKLPPNSWKPFGNGERGCIGRAFAWQEAQLVVASVLQTFDLVAEDPYYKLRIKETLTIKPDGFRVRATLRRGQSATALSQHNMSAGATASPGSSTHLAGDENGQDTAGGQPISFFYGSNSGTCKALAHRLASTMMTRGFTDQHLAQLDSAVDNLPRDQPTIIVTTTYDGQPTDDAKKFLAWLESGNVPSLHGVSYAVFGCGHQDWTKTFYRIPILIDDLMHKAGATRLTTRGTANAAVSDLFSDLEVWEETNLLPALREKFYLCNSSDFEPLDPHQLQISISKPARVGMHRDLVEGKVTAIRTLTSPGVPEKRHVEFQIPSEMALRPGDHVNILPVNPPCSVLRALARFSLASDHSITFESSNALDLPQATPVSAAELFSSYLELSQPATRINLKSLASATPSDDDKKELLHFHDSYDSLIRDKRVSVLDLLEHFTSITLPIATFISMLPVLRVRTYSLSMAPSFKPLHCSLTFSVVNEPAWSGNGRYLGVGSNYLASLTPGSILYVSPRPAKDAFHLPTDQSSNPIIMICAGSGLAPFRSFIQDRMAWLQQGKPLAKALLFFGCRGPHLDDLYHDELSEFESAGVVEVRRAYSKVPNHYLAKGCRYAQHRLLTETETIQDMWAHNATLYLCGSANLAKGVKAVLENMLGTLSEERYITEIF.

Residue Cys405 coordinates heme. Residues 461–470 (SATALSQHNM) are compositionally biased toward polar residues. The segment at 461 to 491 (SATALSQHNMSAGATASPGSSTHLAGDENGQ) is disordered. The segment covering 471-482 (SAGATASPGSST) has biased composition (low complexity). Residues 499-640 (ISFFYGSNSG…DLEVWEETNL (142 aa)) enclose the Flavodoxin-like domain. Residues 505-509 (SNSGT) and 584-616 (VFGCGHQDWTKTFYRIPILIDDLMHKAGATRLT) each bind FMN. The region spanning 678–906 (RDLVEGKVTA…RPAKDAFHLP (229 aa)) is the FAD-binding FR-type domain.

This sequence in the N-terminal section; belongs to the cytochrome P450 family. Requires FAD as cofactor. The cofactor is FMN. Heme serves as cofactor.

It carries out the reaction 2 oxidized [cytochrome P450] + NADPH = 2 reduced [cytochrome P450] + NADP(+) + H(+). The catalysed reaction is an organic molecule + reduced [NADPH--hemoprotein reductase] + O2 = an alcohol + oxidized [NADPH--hemoprotein reductase] + H2O + H(+). The enzyme catalyses dodecanoate + reduced [NADPH--hemoprotein reductase] + O2 = 5-hydroxydodecanoate + oxidized [NADPH--hemoprotein reductase] + H2O + H(+). It catalyses the reaction dodecan-1-ol + reduced [NADPH--hemoprotein reductase] + O2 = 1,5-dodecanediol + oxidized [NADPH--hemoprotein reductase] + H2O + H(+). It carries out the reaction dodecanoate + reduced [NADPH--hemoprotein reductase] + O2 = 9-hydroxydodecanoate + oxidized [NADPH--hemoprotein reductase] + H2O + H(+). The catalysed reaction is dodecan-1-ol + reduced [NADPH--hemoprotein reductase] + O2 = 1,4-dodecanediol + oxidized [NADPH--hemoprotein reductase] + H2O + H(+). The enzyme catalyses dodecan-1-ol + reduced [NADPH--hemoprotein reductase] + O2 = 1,6-dodecanediol + oxidized [NADPH--hemoprotein reductase] + H2O + H(+). In terms of biological role, self-sufficient cytochrome P450 monooxygenase that catalyzes the regioselective in-chain hydroxylation of alkanes, fatty alcohols, and fatty acids at the omega-7 position. Performs hydroxylation of C10-C16 n-alkanes and C12 and C14 fatty alcohols; and thereby enables the one step biocatalytic synthesis of rare alcohols such as 5-dodecanol and 7-tetradecanol. Converts 1-dodecanol into 1,5-dodecanediol as major product with very little sub-terminally hydroxylated products with the 1,4-dodecanediol and 1,6-dodecanediol more abundant. Converts dodecanoic acid to 5-hydroxydodecanoic acid which can be further converted into delta-dodecalactone by lactonization of the 5-hydroxy acid at low pH. Also gives sub-terminal hydroxylation of dodecanoic acid with 9-hydroxydodecanoic acid being the second most abundant product. Does not show any significant activity toward tetradecanoic acid. The protein is Self-sufficient cytochrome P450 monooxygenase CYP505E4 of Penicillium camemberti (strain FM 013).